Consider the following 830-residue polypeptide: Serine/threonine-protein kinase pkn2 (830 aa).

Topologically, residues 1–605 are cytoplasmic; that stretch reads MLAPDSLVLD…GELLRQRRRE (605 aa). The 271-residue stretch at 13–283 folds into the Protein kinase domain; it reads FRVLRPLGSG…DALAAAHSAL (271 aa). ATP is bound by residues 19–27 and Lys-42; that span reads LGSGGMGEV. Asp-135 (proton acceptor) is an active-site residue. The segment at 296–326 is disordered; sequence VPQPGSGATPSSGTSVFGTGSASGSSSGPTG. The span at 299-326 shows a compositional bias: low complexity; sequence PGSGATPSSGTSVFGTGSASGSSSGPTG. A Guanylate cyclase domain is found at 396–511; it reads TVMLTDIQGF…EPMEVIEAVE (116 aa). The chain crosses the membrane as a helical span at residues 606-623; the sequence is AALVAGAVVLLGAGAAWL. At 624-830 the chain is on the periplasmic side; sequence SQRNDAGTRA…AIKSLKQKSD (207 aa).

This sequence belongs to the protein kinase superfamily. Ser/Thr protein kinase family.

It localises to the cell membrane. The enzyme catalyses L-seryl-[protein] + ATP = O-phospho-L-seryl-[protein] + ADP + H(+). It catalyses the reaction L-threonyl-[protein] + ATP = O-phospho-L-threonyl-[protein] + ADP + H(+). In terms of biological role, regulates the activity of endogenous beta-lactamase or related enzymes, by blocking their secretion by phosphorylation, in response to an external signal yet to be identified. This chain is Serine/threonine-protein kinase pkn2 (pkn2), found in Myxococcus xanthus.